The primary structure comprises 315 residues: 4-hydroxy-3-methylbut-2-enyl diphosphate reductase (315 aa).

Position 12 (cysteine 12) interacts with [4Fe-4S] cluster. The (2E)-4-hydroxy-3-methylbut-2-enyl diphosphate site is built by histidine 41 and histidine 74. Residues histidine 41 and histidine 74 each contribute to the dimethylallyl diphosphate site. Residues histidine 41 and histidine 74 each contribute to the isopentenyl diphosphate site. Cysteine 96 lines the [4Fe-4S] cluster pocket. Residue histidine 124 coordinates (2E)-4-hydroxy-3-methylbut-2-enyl diphosphate. Histidine 124 contributes to the dimethylallyl diphosphate binding site. Histidine 124 provides a ligand contact to isopentenyl diphosphate. Catalysis depends on glutamate 126, which acts as the Proton donor. Threonine 168 provides a ligand contact to (2E)-4-hydroxy-3-methylbut-2-enyl diphosphate. Position 198 (cysteine 198) interacts with [4Fe-4S] cluster. Serine 226, serine 227, asparagine 228, and serine 270 together coordinate (2E)-4-hydroxy-3-methylbut-2-enyl diphosphate. Residues serine 226, serine 227, asparagine 228, and serine 270 each contribute to the dimethylallyl diphosphate site. 4 residues coordinate isopentenyl diphosphate: serine 226, serine 227, asparagine 228, and serine 270.

Belongs to the IspH family. [4Fe-4S] cluster is required as a cofactor.

The enzyme catalyses isopentenyl diphosphate + 2 oxidized [2Fe-2S]-[ferredoxin] + H2O = (2E)-4-hydroxy-3-methylbut-2-enyl diphosphate + 2 reduced [2Fe-2S]-[ferredoxin] + 2 H(+). It catalyses the reaction dimethylallyl diphosphate + 2 oxidized [2Fe-2S]-[ferredoxin] + H2O = (2E)-4-hydroxy-3-methylbut-2-enyl diphosphate + 2 reduced [2Fe-2S]-[ferredoxin] + 2 H(+). It participates in isoprenoid biosynthesis; dimethylallyl diphosphate biosynthesis; dimethylallyl diphosphate from (2E)-4-hydroxy-3-methylbutenyl diphosphate: step 1/1. It functions in the pathway isoprenoid biosynthesis; isopentenyl diphosphate biosynthesis via DXP pathway; isopentenyl diphosphate from 1-deoxy-D-xylulose 5-phosphate: step 6/6. Its function is as follows. Catalyzes the conversion of 1-hydroxy-2-methyl-2-(E)-butenyl 4-diphosphate (HMBPP) into a mixture of isopentenyl diphosphate (IPP) and dimethylallyl diphosphate (DMAPP). Acts in the terminal step of the DOXP/MEP pathway for isoprenoid precursor biosynthesis. This is 4-hydroxy-3-methylbut-2-enyl diphosphate reductase from Pseudomonas syringae pv. syringae (strain B728a).